The following is a 326-amino-acid chain: ATP-dependent 6-phosphofructokinase (326 aa).

Glycine 14 is a binding site for ATP. ADP is bound at residue arginine 24–arginine 28. ATP-binding positions include arginine 75–phenylalanine 76 and glycine 105–serine 108. Asparagine 106 lines the Mg(2+) pocket. Residue threonine 129–aspartate 131 coordinates substrate. The active-site Proton acceptor is aspartate 131. Arginine 158 serves as a coordination point for ADP. Residues arginine 166 and methionine 173 to arginine 175 contribute to the substrate site. ADP contacts are provided by residues glycine 189–glutamate 191, lysine 215, and lysine 216–alanine 218. Substrate-binding positions include glutamate 225, arginine 248, and histidine 254–arginine 257.

Belongs to the phosphofructokinase type A (PFKA) family. ATP-dependent PFK group I subfamily. Prokaryotic clade 'B1' sub-subfamily. In terms of assembly, homotetramer. Mg(2+) is required as a cofactor.

The protein localises to the cytoplasm. It catalyses the reaction beta-D-fructose 6-phosphate + ATP = beta-D-fructose 1,6-bisphosphate + ADP + H(+). Its pathway is carbohydrate degradation; glycolysis; D-glyceraldehyde 3-phosphate and glycerone phosphate from D-glucose: step 3/4. With respect to regulation, allosterically activated by ADP and other diphosphonucleosides, and allosterically inhibited by phosphoenolpyruvate. Functionally, catalyzes the phosphorylation of D-fructose 6-phosphate to fructose 1,6-bisphosphate by ATP, the first committing step of glycolysis. This chain is ATP-dependent 6-phosphofructokinase, found in Coxiella burnetii (strain RSA 493 / Nine Mile phase I).